The sequence spans 207 residues: ATP-dependent Clp protease proteolytic subunit (207 aa).

S112 functions as the Nucleophile in the catalytic mechanism. H137 is an active-site residue.

This sequence belongs to the peptidase S14 family. Fourteen ClpP subunits assemble into 2 heptameric rings which stack back to back to give a disk-like structure with a central cavity, resembling the structure of eukaryotic proteasomes.

It is found in the cytoplasm. It carries out the reaction Hydrolysis of proteins to small peptides in the presence of ATP and magnesium. alpha-casein is the usual test substrate. In the absence of ATP, only oligopeptides shorter than five residues are hydrolyzed (such as succinyl-Leu-Tyr-|-NHMec, and Leu-Tyr-Leu-|-Tyr-Trp, in which cleavage of the -Tyr-|-Leu- and -Tyr-|-Trp bonds also occurs).. Cleaves peptides in various proteins in a process that requires ATP hydrolysis. Has a chymotrypsin-like activity. Plays a major role in the degradation of misfolded proteins. The sequence is that of ATP-dependent Clp protease proteolytic subunit from Bacteroides fragilis (strain ATCC 25285 / DSM 2151 / CCUG 4856 / JCM 11019 / LMG 10263 / NCTC 9343 / Onslow / VPI 2553 / EN-2).